The primary structure comprises 897 residues: 3'-5' exonuclease DinG (897 aa).

The 154-residue stretch at Val-8–Leu-161 folds into the Exonuclease domain. Residues Ser-241–Arg-496 enclose the Helicase ATP-binding domain. Ala-276 to Ser-283 lines the ATP pocket. A DEAH box motif is present at residues Asp-448 to His-451. Residues Asn-703–Gln-893 form the Helicase C-terminal domain.

It belongs to the helicase family. DinG subfamily. Type 2 sub-subfamily.

Functionally, 3'-5' exonuclease. The polypeptide is 3'-5' exonuclease DinG (Staphylococcus aureus (strain MSSA476)).